Reading from the N-terminus, the 430-residue chain is Bifunctional protein GlmU (430 aa).

A pyrophosphorylase region spans residues 1 to 223 (MSFSVVILAA…KNEFQGVNSK (223 aa)). Residues 8-11 (LAAG), Lys22, and 81-82 (GT) each bind UDP-N-acetyl-alpha-D-glucosamine. Position 102 (Asp102) interacts with Mg(2+). Gly135, Glu149, Asn164, and Asn221 together coordinate UDP-N-acetyl-alpha-D-glucosamine. Mg(2+) is bound at residue Asn221. Residues 224 to 244 (YDLANAEIVMQDRIKRHWMQQ) are linker. The segment at 245-430 (GVIMRLPQTI…DFYYKFFGKN (186 aa)) is N-acetyltransferase. UDP-N-acetyl-alpha-D-glucosamine contacts are provided by Arg308 and Lys325. His336 functions as the Proton acceptor in the catalytic mechanism. The UDP-N-acetyl-alpha-D-glucosamine site is built by Tyr339 and Asn350. Residues Ala353, 359–360 (NY), Ser378, Ala396, and Arg413 each bind acetyl-CoA.

This sequence in the N-terminal section; belongs to the N-acetylglucosamine-1-phosphate uridyltransferase family. It in the C-terminal section; belongs to the transferase hexapeptide repeat family. Homotrimer. Mg(2+) is required as a cofactor.

It is found in the cytoplasm. The catalysed reaction is alpha-D-glucosamine 1-phosphate + acetyl-CoA = N-acetyl-alpha-D-glucosamine 1-phosphate + CoA + H(+). The enzyme catalyses N-acetyl-alpha-D-glucosamine 1-phosphate + UTP + H(+) = UDP-N-acetyl-alpha-D-glucosamine + diphosphate. It participates in nucleotide-sugar biosynthesis; UDP-N-acetyl-alpha-D-glucosamine biosynthesis; N-acetyl-alpha-D-glucosamine 1-phosphate from alpha-D-glucosamine 6-phosphate (route II): step 2/2. Its pathway is nucleotide-sugar biosynthesis; UDP-N-acetyl-alpha-D-glucosamine biosynthesis; UDP-N-acetyl-alpha-D-glucosamine from N-acetyl-alpha-D-glucosamine 1-phosphate: step 1/1. The protein operates within bacterial outer membrane biogenesis; LPS lipid A biosynthesis. Catalyzes the last two sequential reactions in the de novo biosynthetic pathway for UDP-N-acetylglucosamine (UDP-GlcNAc). The C-terminal domain catalyzes the transfer of acetyl group from acetyl coenzyme A to glucosamine-1-phosphate (GlcN-1-P) to produce N-acetylglucosamine-1-phosphate (GlcNAc-1-P), which is converted into UDP-GlcNAc by the transfer of uridine 5-monophosphate (from uridine 5-triphosphate), a reaction catalyzed by the N-terminal domain. This Nitratiruptor sp. (strain SB155-2) protein is Bifunctional protein GlmU.